Reading from the N-terminus, the 160-residue chain is Small ribosomal subunit protein uS7A (160 aa).

The protein belongs to the universal ribosomal protein uS7 family. In terms of assembly, part of the 30S ribosomal subunit. Contacts proteins S9 and S11.

Its function is as follows. One of the primary rRNA binding proteins, it binds directly to 16S rRNA where it nucleates assembly of the head domain of the 30S subunit. Is located at the subunit interface close to the decoding center, probably blocks exit of the E-site tRNA. The polypeptide is Small ribosomal subunit protein uS7A (Aquifex aeolicus (strain VF5)).